The following is a 257-amino-acid chain: Adenylate kinase (257 aa).

Gly52–Thr57 provides a ligand contact to ATP. An NMP region spans residues Ala72–Val101. Residues Thr73, Arg78, Gly99–Val101, Gly128–Arg131, and Gln135 contribute to the AMP site. Residues Gly169–Asp206 are LID. Residues Arg170 and Ser179–Tyr180 each bind ATP. Arg203 and Arg214 together coordinate AMP. ATP is bound at residue Gln242.

Belongs to the adenylate kinase family. AK2 subfamily. As to quaternary structure, monomer.

The protein resides in the cytoplasm. The protein localises to the cytosol. Its subcellular location is the mitochondrion intermembrane space. The enzyme catalyses AMP + ATP = 2 ADP. Catalyzes the reversible transfer of the terminal phosphate group between ATP and AMP. Plays an important role in cellular energy homeostasis and in adenine nucleotide metabolism. Adenylate kinase activity is critical for regulation of the phosphate utilization and the AMP de novo biosynthesis pathways. This chain is Adenylate kinase (adk1), found in Aspergillus fumigatus (strain CBS 144.89 / FGSC A1163 / CEA10) (Neosartorya fumigata).